Here is a 131-residue protein sequence, read N- to C-terminus: Small ribosomal subunit protein uS8 (131 aa).

The protein belongs to the universal ribosomal protein uS8 family. In terms of assembly, part of the 30S ribosomal subunit. Contacts proteins S5 and S12.

Its function is as follows. One of the primary rRNA binding proteins, it binds directly to 16S rRNA central domain where it helps coordinate assembly of the platform of the 30S subunit. The chain is Small ribosomal subunit protein uS8 from Bordetella avium (strain 197N).